Consider the following 143-residue polypeptide: MISRRKIRELIVQFLYQWEMNKGVGLDNMLLDFWDFSPLDQKDKEAVEQWLKEIAEHKEAIEEKINSYVKNWSLDRLAPVDKCILILGIYEILYRKDIPPAVSINESVEIAKKYSTEESGKFVNGILDSVLKDSGRKAWMSCP.

This sequence belongs to the NusB family.

Functionally, involved in transcription antitermination. Required for transcription of ribosomal RNA (rRNA) genes. Binds specifically to the boxA antiterminator sequence of the ribosomal RNA (rrn) operons. The sequence is that of Transcription antitermination protein NusB from Methylacidiphilum infernorum (isolate V4) (Methylokorus infernorum (strain V4)).